An 89-amino-acid polypeptide reads, in one-letter code: Endoribonuclease VapD 1 (89 aa).

Belongs to the VapD ribonuclease family. Homodimer.

Cleaves ssRNA, mostly between U:A. This Riemerella anatipestifer (Moraxella anatipestifer) protein is Endoribonuclease VapD 1.